The chain runs to 538 residues: Putative cysteine ligase BshC (538 aa).

Positions 460–483 (KINEQIELLEKMLKRNVEKKHEVQ) form a coiled coil.

Belongs to the BshC family.

Its function is as follows. Involved in bacillithiol (BSH) biosynthesis. May catalyze the last step of the pathway, the addition of cysteine to glucosamine malate (GlcN-Mal) to generate BSH. The polypeptide is Putative cysteine ligase BshC (Bacillus mycoides (strain KBAB4) (Bacillus weihenstephanensis)).